The chain runs to 164 residues: S-ribosylhomocysteine lyase (164 aa).

Positions 61, 65, and 131 each coordinate Fe cation.

It belongs to the LuxS family. In terms of assembly, homodimer. Fe cation is required as a cofactor.

The catalysed reaction is S-(5-deoxy-D-ribos-5-yl)-L-homocysteine = (S)-4,5-dihydroxypentane-2,3-dione + L-homocysteine. In terms of biological role, involved in the synthesis of autoinducer 2 (AI-2) which is secreted by bacteria and is used to communicate both the cell density and the metabolic potential of the environment. The regulation of gene expression in response to changes in cell density is called quorum sensing. Catalyzes the transformation of S-ribosylhomocysteine (RHC) to homocysteine (HC) and 4,5-dihydroxy-2,3-pentadione (DPD). In Bifidobacterium longum subsp. infantis (strain ATCC 15697 / DSM 20088 / JCM 1222 / NCTC 11817 / S12), this protein is S-ribosylhomocysteine lyase.